Consider the following 984-residue polypeptide: MALDCLLLFLLASAVAAMEETLMDTRTATAELGWTANPASGWEEVSGYDENLNTIRTYQVCNVFEPNQNNWLLTTFINRRGAHRIYTEMRFTVRDCSSLPNVPGSCKETFNLYYYETDSVIATKKSAFWSEAPYLKVDTIAADESFSQVDFGGRLMKVNTEVRSFGPLTRNGFYLAFQDYGACMSLLSVRVFFKKCPSIVQNFAVFPETMTGAESTSLVIARGTCIPNAEEVDVPIKLYCNGDGEWMVPIGRCTCKAGYEPENSVACKACPAGTFKASQEAEGCSHCPSNSRSPSEASPICTCRTGYYRADFDPPEVACTSVPSGPRNVISIVNETSIILEWHPPRETGGRDDVTYNIICKKCRADRRSCSRCDDNVEFVPRQLGLTECRVSISSLWAHTPYTFDIQAINGVSSKSPFPPQHVSVNITTNQAAPSTVPIMHQVSATMRSITLSWPQPEQPNGIILDYEIRYYEKEHNEFNSSMARSQTNTARIDGLRPGMVYVVQVRARTVAGYGKFSGKMCFQTLTDDDYKSELREQLPLIAGSAAAGVVFVVSLVAISIVCSRKRAYSKEAVYSDKLQHYSTGRGSPGMKIYIDPFTYEDPNEAVREFAKEIDVSFVKIEEVIGAGEFGEVYKGRLKLPGKREIYVAIKTLKAGYSEKQRRDFLSEASIMGQFDHPNIIRLEGVVTKSRPVMIITEFMENGALDSFLRQNDGQFTVIQLVGMLRGIAAGMKYLSEMNYVHRDLAARNILVNSNLVCKVSDFGLSRYLQDDTSDPTYTSSLGGKIPVRWTAPEAIAYRKFTSASDVWSYGIVMWEVMSFGERPYWDMSNQDVINAIEQDYRLPPPMDCPAALHQLMLDCWQKDRNSRPRFAEIVNTLDKMIRNPASLKTVATITAVPSQPLLDRSIPDFTAFTTVDDWLSAIKMVQYRDSFLTAGFTSLQLVTQMTSEDLLRIGVTLAGHQKKILSSIHSMRVQMNQSPSVMA.

The signal sequence occupies residues Met1–Ala17. The Extracellular portion of the chain corresponds to Met18–Pro540. Residues Glu19 to Gln201 enclose the Eph LBD domain. 2 Fibronectin type-III domains span residues Val322 to Ala432 and Ala433 to Asp528. Residues Asn334, Asn426, and Asn480 are each glycosylated (N-linked (GlcNAc...) asparagine). A helical transmembrane segment spans residues Leu541 to Cys563. Residues Ser564–Ala984 lie on the Cytoplasmic side of the membrane. Tyr600 carries the post-translational modification Phosphotyrosine. Residues Val619 to Ile882 form the Protein kinase domain. ATP-binding positions include Ile625–Val633 and Lys651. The active-site Proton acceptor is the Asp744. The region spanning Thr911–Gln975 is the SAM domain. Position 928 is a phosphotyrosine; by autocatalysis (Tyr928). Residues Val982–Ala984 carry the PDZ-binding motif.

This sequence belongs to the protein kinase superfamily. Tyr protein kinase family. Ephrin receptor subfamily. As to quaternary structure, heterotetramer upon binding of the ligand. The heterotetramer is composed of an ephrin dimer and a receptor dimer. Oligomerization is probably required to induce biological responses. Interacts with EPHB6; transphosphorylates EPHB6 to form an active signaling complex. Interacts with PICK1. Interacts (through Tyr-594) with NCK1 (via SH2 domain); activates the JUN cascade to regulate cell adhesion. The ligand-activated form interacts (through Tyr-928) with GRB7 and GRB10 (via SH2 domains). The ligand-activated form interacts (residues within the catalytic domain) with GRB2 (via SH2 domain). Interacts with GRB2, SHC1 and SRC; activates the MAPK/ERK cascade to regulate cell migration. Interacts with CBL; regulates receptor degradation through ubiquitination. Interacts with ACP1. In terms of processing, phosphorylated. Autophosphorylation is stimulated by the ligand EFNB1. Required for interaction with SH2 domain-containing interactors, for activation of the MAPK/ERK and JUN signaling cascades and for ubiquitination by CBL. Ubiquitinated; (EFNB1)ligand-induced poly- and/or multi-ubiquitination by CBL is regulated by SRC and leads to lysosomal degradation. As to expression, restricted to brain and testes.

It localises to the cell membrane. Its subcellular location is the early endosome membrane. It is found in the cell projection. The protein resides in the dendrite. It carries out the reaction L-tyrosyl-[protein] + ATP = O-phospho-L-tyrosyl-[protein] + ADP + H(+). Functionally, receptor tyrosine kinase which binds promiscuously transmembrane ephrin-B family ligands residing on adjacent cells, leading to contact-dependent bidirectional signaling into neighboring cells. The signaling pathway downstream of the receptor is referred to as forward signaling while the signaling pathway downstream of the ephrin ligand is referred to as reverse signaling. Cognate/functional ephrin ligands for this receptor include EFNB1, EFNB2 and EFNB3. During nervous system development, regulates retinal axon guidance redirecting ipsilaterally ventrotemporal retinal ganglion cells axons at the optic chiasm midline. This probably requires repulsive interaction with EFNB2. In the adult nervous system together with EFNB3, regulates chemotaxis, proliferation and polarity of the hippocampus neural progenitors. In addition to its role in axon guidance also plays an important redundant role with other ephrin-B receptors in development and maturation of dendritic spines and synapse formation. May also regulate angiogenesis. More generally, may play a role in targeted cell migration and adhesion. Upon activation by EFNB1 and probably other ephrin-B ligands activates the MAPK/ERK and the JNK signaling cascades to regulate cell migration and adhesion respectively. Involved in the maintenance of the pool of satellite cells (muscle stem cells) by promoting their self-renewal and reducing their activation and differentiation. The chain is Ephrin type-B receptor 1 (Ephb1) from Rattus norvegicus (Rat).